Consider the following 155-residue polypeptide: Protein phosphatase 1 regulatory subunit 17 (155 aa).

The tract at residues 41-73 is disordered; sequence KKKPRKGKNVQATLNVESDQKKPRRKDTPALHI. Basic and acidic residues predominate over residues 58–69; the sequence is SDQKKPRRKDTP. Phosphothreonine; by PKG/PRKG1 occurs at positions 68 and 119.

In terms of processing, substrate for cGMP-dependent protein kinase. Phosphorylated by PRKG1 isoform alpha. Phosphorylation of Thr-68 and Thr-119 is required for its phosphatase activity. Post-translationally, substrate for cGMP-dependent protein kinase. Highly expressed in cerebellum.

Its function is as follows. Inhibits phosphatase activities of protein phosphatase 1 (PP1) and protein phosphatase 2A (PP2A) complexes. The sequence is that of Protein phosphatase 1 regulatory subunit 17 (PPP1R17) from Homo sapiens (Human).